Consider the following 877-residue polypeptide: SRP-independent targeting protein 1 (877 aa).

5 positions are modified to phosphoserine: serine 309, serine 310, serine 311, serine 332, and serine 334. Disordered regions lie at residues leucine 369–aspartate 414, aspartate 446–serine 521, and lysine 550–phenylalanine 579. A compositionally biased stretch (low complexity) spans arginine 389–proline 402. The stretch at serine 412 to asparagine 441 forms a coiled coil. Residues aspartate 447–tyrosine 462 show a composition bias toward basic and acidic residues. Over residues tyrosine 470 to glycine 501 the composition is skewed to acidic residues. Polar residues-rich tracts occupy residues leucine 510–serine 521 and proline 551–phenylalanine 579. Residues lysine 668 and lysine 670 each participate in a glycyl lysine isopeptide (Lys-Gly) (interchain with G-Cter in ubiquitin) cross-link. A phosphoserine mark is found at serine 692, serine 694, and serine 706. The disordered stretch occupies residues serine 773–phenylalanine 815. A compositionally biased stretch (low complexity) spans aspartate 805–phenylalanine 815. Serine 841 bears the Phosphoserine mark.

Interacts with ENV10/SND2.

The protein localises to the cytoplasm. Functions in the SND pathway, a SRP (signal recognition particle) and GET (guided entry of tail-anchored proteins) independent pathway for targeting a broad range of substrate proteins to the endoplasmic reticulum. SND functions in parallel to GET in targeting proteins with downstream hydrophobic motifs. The protein is SRP-independent targeting protein 1 of Saccharomyces cerevisiae (strain ATCC 204508 / S288c) (Baker's yeast).